We begin with the raw amino-acid sequence, 184 residues long: NADH-quinone oxidoreductase subunit B (184 aa).

The [4Fe-4S] cluster site is built by Cys-63, Cys-64, Cys-128, and Cys-158.

Belongs to the complex I 20 kDa subunit family. NDH-1 is composed of 14 different subunits. Subunits NuoB, C, D, E, F, and G constitute the peripheral sector of the complex. [4Fe-4S] cluster is required as a cofactor.

Its subcellular location is the cell inner membrane. It carries out the reaction a quinone + NADH + 5 H(+)(in) = a quinol + NAD(+) + 4 H(+)(out). NDH-1 shuttles electrons from NADH, via FMN and iron-sulfur (Fe-S) centers, to quinones in the respiratory chain. Couples the redox reaction to proton translocation (for every two electrons transferred, four hydrogen ions are translocated across the cytoplasmic membrane), and thus conserves the redox energy in a proton gradient. In Xanthomonas campestris pv. campestris (strain 8004), this protein is NADH-quinone oxidoreductase subunit B.